The sequence spans 157 residues: MQEENQHPEQDDISEAQDAGAAGSLDARIAELEAQLAEQQANVLYVKAEGENIRRRAAEDIDKARKFALEKFSSELLAVKDSLDAALVVENATVESYKSGVELTAKQLLSVFEKFHITEINPLGEKFDPNKHQAISMLESDQEPNSVISVLQNVRPE.

Basic and acidic residues predominate over residues methionine 1–glutamine 10. The disordered stretch occupies residues methionine 1–alanine 21.

It belongs to the GrpE family. As to quaternary structure, homodimer.

It is found in the cytoplasm. Functionally, participates actively in the response to hyperosmotic and heat shock by preventing the aggregation of stress-denatured proteins, in association with DnaK and GrpE. It is the nucleotide exchange factor for DnaK and may function as a thermosensor. Unfolded proteins bind initially to DnaJ; upon interaction with the DnaJ-bound protein, DnaK hydrolyzes its bound ATP, resulting in the formation of a stable complex. GrpE releases ADP from DnaK; ATP binding to DnaK triggers the release of the substrate protein, thus completing the reaction cycle. Several rounds of ATP-dependent interactions between DnaJ, DnaK and GrpE are required for fully efficient folding. The protein is Protein GrpE of Methylovorus sp. (strain SS1 / DSM 11726).